The sequence spans 836 residues: Probable ribonuclease ZC3H12B (836 aa).

Positions 1-92 (MTATAEVETP…SPCLDRPSFS (92 aa)) are disordered. Residues 8–28 (ETPKMEKSASKEEKQQPKQDS) show a composition bias toward basic and acidic residues. Acidic residues predominate over residues 35-46 (DSEEWMSSESDP). Polar residues predominate over residues 50-60 (SLKSSDNSKSC). Over residues 70–80 (KEMHSKPHRQL) the composition is skewed to basic residues. One can recognise an RNase NYN domain in the interval 190-345 (LRPVVIDGSN…LGRHGPSLEN (156 aa)). The segment at 355–380 (EHKKQPCPYGKKCTYGHKCKYYHPER) adopts a C3H1-type zinc-finger fold.

It belongs to the ZC3H12 family. The cofactor is Mg(2+).

May function as RNase and regulate the levels of target RNA species. This Homo sapiens (Human) protein is Probable ribonuclease ZC3H12B (ZC3H12B).